The sequence spans 328 residues: Tyrosine--tRNA ligase (328 aa).

Tyr-33 contributes to the L-tyrosine binding site. The 'HIGH' region signature appears at 38–46; sequence PSGVLHIGH. The L-tyrosine site is built by Tyr-154, Gln-158, Asp-161, and Gln-176. Residues 193–227 are disordered; sequence EPPTSLHTPLIADLGTGRGKMSSSEGVTISMEDSR. Positions 212-216 match the 'KMSKS' region motif; that stretch reads KMSSS. Ser-215 serves as a coordination point for ATP.

Belongs to the class-I aminoacyl-tRNA synthetase family. TyrS type 3 subfamily. Homodimer.

It localises to the cytoplasm. The catalysed reaction is tRNA(Tyr) + L-tyrosine + ATP = L-tyrosyl-tRNA(Tyr) + AMP + diphosphate + H(+). Its function is as follows. Catalyzes the attachment of tyrosine to tRNA(Tyr) in a two-step reaction: tyrosine is first activated by ATP to form Tyr-AMP and then transferred to the acceptor end of tRNA(Tyr). The polypeptide is Tyrosine--tRNA ligase (Halorubrum lacusprofundi (strain ATCC 49239 / DSM 5036 / JCM 8891 / ACAM 34)).